Consider the following 95-residue polypeptide: Co-chaperonin GroES (95 aa).

Belongs to the GroES chaperonin family. In terms of assembly, heptamer of 7 subunits arranged in a ring. Interacts with the chaperonin GroEL.

The protein localises to the cytoplasm. Its function is as follows. Together with the chaperonin GroEL, plays an essential role in assisting protein folding. The GroEL-GroES system forms a nano-cage that allows encapsulation of the non-native substrate proteins and provides a physical environment optimized to promote and accelerate protein folding. GroES binds to the apical surface of the GroEL ring, thereby capping the opening of the GroEL channel. This chain is Co-chaperonin GroES, found in Deinococcus radiodurans (strain ATCC 13939 / DSM 20539 / JCM 16871 / CCUG 27074 / LMG 4051 / NBRC 15346 / NCIMB 9279 / VKM B-1422 / R1).